The sequence spans 1053 residues: Middle cell wall protein (1053 aa).

The signal sequence occupies residues methionine 1–alanine 23. 3 consecutive SLH domains span residues glutamate 26–glutamine 89, phenylalanine 90–tryptophan 153, and proline 154–aspartate 203.

In terms of assembly, the middle cell wall layer is composed of subunits of the middle cell wall protein. These proteins form a hexagonal array with a lattice constant of 14.5 nM in the middle cell wall layers.

The protein localises to the secreted. Its subcellular location is the cell wall. It localises to the S-layer. Functionally, the middle wall protein binds to peptidoglycan and to the outer cell wall protein. The polypeptide is Middle cell wall protein (Brevibacillus brevis (strain 47 / JCM 6285 / NBRC 100599)).